The sequence spans 587 residues: MEGESVKLSSQTLIQAGDDEKNQRTITVNPAHMGKAFKVMNELRSKQLLCDVMIVAEDVEIEAHRVVLAACSPYFCAMFTGDMSESKAKKIEIKDVDGQTLSKLIDYVYTAEIEVTEENVQVLLPAASLLQLMDVRQNCCDFLQSQLHPTNCLGIRAFADVHTCTDLLQQANAYAEQHFPEVMLGEEFLSLSLDQVCSLISSDKLTVSSEEKVFEAVISWINYEKGTRLEHMAKLMEHVRLPLLPRDYLVQTVEEEALIKNNNTCKDFLIEAMKYHLLPLDQRLLIKNPRTKPRTPVSLPKVMIVVGGQAPKAIRSVECYDFEEDRWDQIAELPSRRCRAGVVFMAGHVYAVGGFNGSLRVRTVDVYDGVKDQWTSIASMQERRSTLGAAVLNDLLYAVGGFDGSTGLASVEAYSYKTNEWFFVAPMNTRRSSVGVGVVEGKLYAVGGYDGASRQCLSTVEQYNPATNEWIYVADMSTRRSGAGVGVLSGQLYATGGHDGPLVRKSVEVYDPGTNTWKQVADMNMCRRNAGVCAVNGLLYVVGGDDGSCNLASVEYYNPVTDKWTLLPTNMSTGRSYAGVAVIHKSL.

Position 10 is a phosphoserine (Ser10). Residues 50 to 117 form the BTB domain; that stretch reads CDVMIVAEDV…VYTAEIEVTE (68 aa). Residues 152-254 enclose the BACK domain; that stretch reads CLGIRAFADV…PRDYLVQTVE (103 aa). At Thr295 the chain carries Phosphothreonine. Kelch repeat units follow at residues 302–347, 348–394, 396–441, 442–490, 491–537, and 539–585; these read VMIV…FMAG, HVYA…VLND, LYAV…VVEG, KLYA…VLSG, QLYA…AVNG, and LYVV…VIHK. Thr375 is subject to Phosphothreonine. Phosphoserine is present on residues Ser376 and Ser433.

It belongs to the KLHL3 family. In terms of assembly, homodimer. Component of the BCR(KLHL3) E3 ubiquitin ligase complex, at least composed of CUL3 and KLHL3 and RBX1. Interacts with CLDN8. In terms of processing, phosphorylation at Ser-433 by PKA or PKC decreases the interaction with WNK1 and WNK4, leading to inhibit their degradation by the BCR(KLHL3) complex. Phosphorylated at Ser-433 by PKC in response to angiotensin II signaling, decreasing ability to promote degradation of WNK1 and WNK4, leading to activation of Na-Cl cotransporter SLC12A3/NCC. Phosphorylation at Ser-433 is increased by insulin. Dephosphorylated at Ser-433 by calcineurin PPP3CA, promoting degradation of WNK1 and WNK4.

The protein resides in the cytoplasm. It is found in the cytoskeleton. It localises to the cytosol. Its pathway is protein modification; protein ubiquitination. Its function is as follows. Substrate-specific adapter of a BCR (BTB-CUL3-RBX1) E3 ubiquitin ligase complex that acts as a regulator of ion transport in the distal nephron. The BCR(KLHL3) complex acts by mediating ubiquitination and degradation of WNK1 and WNK4, two activators of Na-Cl cotransporter SLC12A3/NCC in distal convoluted tubule cells of kidney, thereby regulating NaCl reabsorption. The BCR(KLHL3) complex also mediates ubiquitination and degradation of WNK3. The BCR(KLHL3) complex also mediates ubiquitination of CLDN8, a tight-junction protein required for paracellular chloride transport in the kidney, leading to its degradation. The protein is Kelch-like protein 3 (KLHL3) of Pongo abelii (Sumatran orangutan).